The following is a 163-amino-acid chain: Protein EARLY RESPONSIVE TO DEHYDRATION 15 (163 aa).

The PAM2-like motif lies at 10-20 (TLNPDAPLFIP). The tract at residues 118–163 (NGEMVKKSSGNRSPRSIVEPAKYAEKPAKWGNQRVAAAPRNIHQPR) is disordered.

As to quaternary structure, interacts with PAB2, PAB4 and PAB8. Interacts with MPC. In terms of tissue distribution, expressed in cauline leaves, stems, rosette leaves, immature siliques and primary inflorescences.

Its subcellular location is the cytoplasm. Its function is as follows. Central component of stress responses that interacts with poly(A)-binding proteins. Negative regulator of abscisic acid (ABA) responses, including resistance to drought and freezing as well as stomatal closure regulation. Mediates resistance to the bacterial necrotroph pathogen Erwinia carotovora subsp. carotovora and promotes the induction of marker genes for systemic acquired resistance (SAR). The sequence is that of Protein EARLY RESPONSIVE TO DEHYDRATION 15 (ERD15) from Arabidopsis thaliana (Mouse-ear cress).